The primary structure comprises 259 residues: Merozoite surface protein CMZ-8 (259 aa).

A compositionally biased stretch (pro residues) spans 1–108 (PLPFSPPSTP…STPVSPPSSP (108 aa)). Disordered regions lie at residues 1 to 127 (PLPF…STSE) and 174 to 203 (RPGS…RHKG). A run of 15 repeats spans residues 5–11 (SPPSTPV), 12–18 (SPPSTPV), 19–25 (SPPSTPV), 26–32 (SPPSTPV), 33–39 (SPPSTPV), 40–46 (SPPSTPV), 47–53 (SPPSTPV), 54–60 (SPPSTPV), 61–67 (SPPSTPV), 68–74 (SPPSTPV), 75–81 (SPPSTPV), 82–88 (SPPSTPV), 89–95 (SPPSTPV), 96–102 (SPPSTPV), and 103–109 (SPPSSPA). Residues 5 to 109 (SPPSTPVSPP…TPVSPPSSPA (105 aa)) are 15 X 7 AA repeats of S-P-P-S-T-P-V. Over residues 184-203 (HCTRSTRSSRRMSRRHRHKG) the composition is skewed to basic residues.

The chain is Merozoite surface protein CMZ-8 from Eimeria acervulina (Coccidian parasite).